Reading from the N-terminus, the 459-residue chain is O-phospho-L-seryl-tRNA:Cys-tRNA synthase 1 (459 aa).

Residues 152 to 153 (AR), asparagine 257, and 280 to 282 (SGH) contribute to the pyridoxal 5'-phosphate site. Lysine 283 is modified (N6-(pyridoxal phosphate)lysine).

The protein belongs to the SepCysS family. Homodimer. Interacts with SepRS. Pyridoxal 5'-phosphate serves as cofactor.

It carries out the reaction O-phospho-L-seryl-tRNA(Cys) + hydrogen sulfide + H(+) = L-cysteinyl-tRNA(Cys) + phosphate. Converts O-phospho-L-seryl-tRNA(Cys) (Sep-tRNA(Cys)) to L-cysteinyl-tRNA(Cys) (Cys-tRNA(Cys)). The polypeptide is O-phospho-L-seryl-tRNA:Cys-tRNA synthase 1 (Methanococcoides burtonii (strain DSM 6242 / NBRC 107633 / OCM 468 / ACE-M)).